A 592-amino-acid chain; its full sequence is A-type ATP synthase subunit A (592 aa).

Position 233–240 (233–240 (GPFGSGKT)) interacts with ATP.

Belongs to the ATPase alpha/beta chains family. In terms of assembly, has multiple subunits with at least A(3), B(3), C, D, E, F, H, I and proteolipid K(x).

The protein resides in the cell membrane. It catalyses the reaction ATP + H2O + 4 H(+)(in) = ADP + phosphate + 5 H(+)(out). In terms of biological role, component of the A-type ATP synthase that produces ATP from ADP in the presence of a proton gradient across the membrane. The A chain is the catalytic subunit. This chain is A-type ATP synthase subunit A, found in Saccharolobus islandicus (strain Y.G.57.14 / Yellowstone #1) (Sulfolobus islandicus).